The chain runs to 480 residues: UDP-glucose 6-dehydrogenase 3 (480 aa).

NAD(+) contacts are provided by residues 8–13, Asp33, Arg38, 86–90, 127–128, and Glu161; these read GAGYVG, VNTPT, and ST. Residues 157-161, 216-223, and 256-269 contribute to the substrate site; these read EFLAE, KLAANAFL, and RIGPKFLNASVGFG. The Nucleophile role is filled by Cys272. Residue 272–275 participates in NAD(+) binding; the sequence is CFQK. A substrate-binding site is contributed by 334–335; it reads FK. Arg342 serves as a coordination point for NAD(+). The residue at position 393 (Ser393) is a Phosphoserine. Arg447 provides a ligand contact to substrate.

It belongs to the UDP-glucose/GDP-mannose dehydrogenase family.

The catalysed reaction is UDP-alpha-D-glucose + 2 NAD(+) + H2O = UDP-alpha-D-glucuronate + 2 NADH + 3 H(+). Its pathway is nucleotide-sugar biosynthesis; UDP-alpha-D-glucuronate biosynthesis; UDP-alpha-D-glucuronate from UDP-alpha-D-glucose: step 1/1. Its function is as follows. Involved in the biosynthesis of UDP-glucuronic acid (UDP-GlcA), providing nucleotide sugars for cell-wall polymers. This chain is UDP-glucose 6-dehydrogenase 3 (UGD3), found in Oryza sativa subsp. japonica (Rice).